An 805-amino-acid chain; its full sequence is Sucrose synthase (805 aa).

Residues 275 to 752 (MVFNVVILSP…GLQRIEEKYT (478 aa)) are GT-B glycosyltransferase.

The protein belongs to the glycosyltransferase 1 family. Plant sucrose synthase subfamily.

The enzyme catalyses an NDP-alpha-D-glucose + D-fructose = a ribonucleoside 5'-diphosphate + sucrose + H(+). Sucrose-cleaving enzyme that provides UDP-glucose and fructose for various metabolic pathways. The protein is Sucrose synthase (SS1) of Vigna radiata var. radiata (Mung bean).